Here is a 172-residue protein sequence, read N- to C-terminus: Lipopolysaccharide export system protein LptA (172 aa).

The first 23 residues, 1–23, serve as a signal peptide directing secretion; that stretch reads MKLVSNKILFLATMVLASSSAFA.

The protein belongs to the LptA family. As to quaternary structure, component of the lipopolysaccharide transport and assembly complex.

It localises to the periplasm. In terms of biological role, involved in the assembly of lipopolysaccharide (LPS). Required for the translocation of LPS from the inner membrane to the outer membrane. May form a bridge between the inner membrane and the outer membrane, via interactions with LptC and LptD, thereby facilitating LPS transfer across the periplasm. This chain is Lipopolysaccharide export system protein LptA, found in Haemophilus influenzae (strain ATCC 51907 / DSM 11121 / KW20 / Rd).